Reading from the N-terminus, the 228-residue chain is PKHD-type hydroxylase Reut_A2877 (228 aa).

The region spanning 80–180 (IVYPPMFNRY…RVASFFWIQS (101 aa)) is the Fe2OG dioxygenase domain. His-98, Asp-100, and His-161 together coordinate Fe cation. 2-oxoglutarate is bound at residue Arg-171.

Fe(2+) is required as a cofactor. It depends on L-ascorbate as a cofactor.

The polypeptide is PKHD-type hydroxylase Reut_A2877 (Cupriavidus pinatubonensis (strain JMP 134 / LMG 1197) (Cupriavidus necator (strain JMP 134))).